The chain runs to 340 residues: Dihydroorotate dehydrogenase (quinone) (340 aa).

FMN contacts are provided by residues 67–71 (AGFDK) and threonine 91. Position 71 (lysine 71) interacts with substrate. 116-120 (NRMGF) is a binding site for substrate. FMN is bound by residues asparagine 143 and asparagine 176. Asparagine 176 is a binding site for substrate. Catalysis depends on serine 179, which acts as the Nucleophile. Asparagine 181 lines the substrate pocket. Residues lysine 217 and threonine 245 each contribute to the FMN site. 246–247 (NT) contributes to the substrate binding site. FMN contacts are provided by residues glycine 267, glycine 296, and 317-318 (YT).

The protein belongs to the dihydroorotate dehydrogenase family. Type 2 subfamily. In terms of assembly, monomer. FMN serves as cofactor.

Its subcellular location is the cell membrane. It catalyses the reaction (S)-dihydroorotate + a quinone = orotate + a quinol. Its pathway is pyrimidine metabolism; UMP biosynthesis via de novo pathway; orotate from (S)-dihydroorotate (quinone route): step 1/1. Its function is as follows. Catalyzes the conversion of dihydroorotate to orotate with quinone as electron acceptor. This Christiangramia forsetii (strain DSM 17595 / CGMCC 1.15422 / KT0803) (Gramella forsetii) protein is Dihydroorotate dehydrogenase (quinone).